Here is a 72-residue protein sequence, read N- to C-terminus: MDAYAVQHFYNNARKPLAPTTLHSGNLPAAAYENVMFIRKLVCRENAPGAHERPFCAHHDYNKENLSEKSRL.

Belongs to the baculoviridae 8 kDa protein family.

This is an uncharacterized protein from Orgyia pseudotsugata (Douglas-fir tussock moth).